We begin with the raw amino-acid sequence, 86 residues long: Large ribosomal subunit protein bL27 (86 aa).

The disordered stretch occupies residues methionine 1–serine 26.

It belongs to the bacterial ribosomal protein bL27 family.

This is Large ribosomal subunit protein bL27 from Rickettsia prowazekii (strain Madrid E).